We begin with the raw amino-acid sequence, 196 residues long: uncharacterized protein (196 aa).

The protein to H.influenzae HI_0431.

This is an uncharacterized protein from Escherichia coli (strain K12).